A 1781-amino-acid chain; its full sequence is Signal-induced proliferation-associated 1-like protein 3 (1781 aa).

Disordered stretches follow at residues 45 to 166 (SMSQ…FLPL) and 239 to 332 (TELL…EASR). A compositionally biased stretch (low complexity) spans 54–73 (PATATATATATTRPSPTTPA). A compositionally biased stretch (basic and acidic residues) spans 87–97 (PPKREALREHS). A Phosphoserine modification is found at Ser100. Over residues 118–135 (RSIQNGQPPTSTPASSGS) the composition is skewed to polar residues. Positions 137 to 146 (AFHRLSRRRS) are enriched in basic residues. A Phosphoserine modification is found at Ser146. Ser401 is subject to Phosphoserine. Residues 611–828 (LLKLDEQGLC…RTRQEYLKDL (218 aa)) form the Rap-GAP domain. A PDZ domain is found at 966-1042 (DMTLRRNGLG…VKVVIIPPFE (77 aa)). Disordered stretches follow at residues 1046-1112 (PRRG…SLSR), 1124-1221 (ESQP…QKPE), 1236-1565 (AGSS…GLEP), and 1583-1636 (TLPA…RLDP). 2 stretches are compositionally biased toward polar residues: residues 1080–1111 (APWQWSGPASHNSLPASKWATPTTPGHAQSLS) and 1157–1166 (PSGSFSTPGS). Low complexity predominate over residues 1196–1210 (DGTSSGDSSSGGLTS). Positions 1245 to 1261 (SRQDAAGKDSPNRHSKG) are enriched in basic and acidic residues. The span at 1266 to 1281 (SSHSSSNTLSSNASSS) shows a compositional bias: low complexity. Residues 1304–1322 (GGSSDSGIDTTLYTSSPSC) show a composition bias toward polar residues. Ser1364 bears the Phosphoserine mark. Position 1387 is a phosphothreonine (Thr1387). The segment covering 1425–1441 (RPSQLAQPSPFQLSASV) has biased composition (polar residues). Lys1448 is modified (N6-acetyllysine). Residues 1509 to 1518 (TIEDDLKKLI) show a composition bias toward basic and acidic residues. Residues 1532 to 1547 (GQSPQKGLQRTLSDES) show a composition bias toward polar residues. 2 positions are modified to phosphoserine: Ser1544 and Ser1547. Residues 1599 to 1609 (PGATPAAGSGF) are compositionally biased toward low complexity. Residues Ser1619 and Ser1622 each carry the phosphoserine modification. The span at 1625-1635 (DGRDRPLRRLD) shows a compositional bias: basic and acidic residues. Residue Ser1677 is modified to Phosphoserine. Positions 1685–1712 (SPVHSHLSLERGPPTPRTTPTMSEEPPL) are disordered. Thr1699 and Thr1703 each carry phosphothreonine. The stretch at 1720–1774 (QLEVMLKQLHTDLQKEKQDKVVLQSEVASLRQNNQRLQEESQAASEQLRKFAEIF) forms a coiled coil.

It localises to the apical cell membrane. Plays a critical role in epithelial cell morphogenesis, polarity, adhesion and cytoskeletal organization in the lens. This Homo sapiens (Human) protein is Signal-induced proliferation-associated 1-like protein 3 (SIPA1L3).